The chain runs to 134 residues: Lymphocyte antigen 6S (134 aa).

An N-terminal signal peptide occupies residues 1-26 (MSSLQAMKTLSLVLLVALLSMERAQG). The region spanning 28–76 (RCYRCLAVLEGASCSVVSCPFLDGVCVSQKVSVFGSKVRGENKLSLLSC) is the UPAR/Ly6 domain. 4 disulfides stabilise this stretch: Cys29/Cys53, Cys32/Cys41, Cys76/Cys98, and Cys99/Cys104. Asn105 carries the GPI-anchor amidated asparagine lipid modification. Positions 106–134 (AVVLAASSPWALCVQLLLSLGSVFLWALL) are cleaved as a propeptide — removed in mature form.

Its subcellular location is the cell membrane. The chain is Lymphocyte antigen 6S from Homo sapiens (Human).